A 357-amino-acid chain; its full sequence is A-type ATP synthase subunit C (357 aa).

Belongs to the V-ATPase V0D/AC39 subunit family. In terms of assembly, has multiple subunits with at least A(3), B(3), C, D, E, F, H, I and proteolipid K(x).

The protein localises to the cell membrane. Functionally, component of the A-type ATP synthase that produces ATP from ADP in the presence of a proton gradient across the membrane. The polypeptide is A-type ATP synthase subunit C (Methanococcoides burtonii (strain DSM 6242 / NBRC 107633 / OCM 468 / ACE-M)).